The primary structure comprises 365 residues: Serpentine receptor class epsilon-21 (365 aa).

Transmembrane regions (helical) follow at residues 49–69, 82–102, 116–136, 158–178, 189–209, 250–270, and 292–314; these read ILIN…VFCI, IIIS…FVFI, LLFW…HTLL, VWIA…YAFL, IFIV…IIYF, VVVV…PIIL, and PLVV…LSYY.

It belongs to the nematode receptor-like protein sre family.

The protein resides in the membrane. The chain is Serpentine receptor class epsilon-21 (sre-21) from Caenorhabditis elegans.